We begin with the raw amino-acid sequence, 1373 residues long: DNA-directed RNA polymerase subunit beta (1373 aa).

It belongs to the RNA polymerase beta chain family. The RNAP catalytic core consists of 2 alpha, 1 beta, 1 beta' and 1 omega subunit. When a sigma factor is associated with the core the holoenzyme is formed, which can initiate transcription.

The catalysed reaction is RNA(n) + a ribonucleoside 5'-triphosphate = RNA(n+1) + diphosphate. DNA-dependent RNA polymerase catalyzes the transcription of DNA into RNA using the four ribonucleoside triphosphates as substrates. This is DNA-directed RNA polymerase subunit beta from Rickettsia massiliae.